Reading from the N-terminus, the 202-residue chain is Large ribosomal subunit protein bL25 (202 aa).

The segment at 182–202 is disordered; that stretch reads EVEAEETEDDEAASEGEEAAE. Residues 183–202 show a composition bias toward acidic residues; sequence VEAEETEDDEAASEGEEAAE.

It belongs to the bacterial ribosomal protein bL25 family. CTC subfamily. As to quaternary structure, part of the 50S ribosomal subunit; part of the 5S rRNA/L5/L18/L25 subcomplex. Contacts the 5S rRNA. Binds to the 5S rRNA independently of L5 and L18.

Functionally, this is one of the proteins that binds to the 5S RNA in the ribosome where it forms part of the central protuberance. In Corynebacterium glutamicum (strain R), this protein is Large ribosomal subunit protein bL25.